The primary structure comprises 38 residues: Large ribosomal subunit protein bL36 (38 aa).

This sequence belongs to the bacterial ribosomal protein bL36 family.

The protein is Large ribosomal subunit protein bL36 of Chloroherpeton thalassium (strain ATCC 35110 / GB-78).